Consider the following 328-residue polypeptide: Biotin synthase (328 aa).

Residues 49–273 (FNKEKIETCS…ICISRIIMPE (225 aa)) enclose the Radical SAM core domain. [4Fe-4S] cluster contacts are provided by C67, C71, and C74. [2Fe-2S] cluster contacts are provided by S110, C142, C201, and R277.

It belongs to the radical SAM superfamily. Biotin synthase family. In terms of assembly, homodimer. [4Fe-4S] cluster is required as a cofactor. [2Fe-2S] cluster serves as cofactor.

The catalysed reaction is (4R,5S)-dethiobiotin + (sulfur carrier)-SH + 2 reduced [2Fe-2S]-[ferredoxin] + 2 S-adenosyl-L-methionine = (sulfur carrier)-H + biotin + 2 5'-deoxyadenosine + 2 L-methionine + 2 oxidized [2Fe-2S]-[ferredoxin]. It functions in the pathway cofactor biosynthesis; biotin biosynthesis; biotin from 7,8-diaminononanoate: step 2/2. Catalyzes the conversion of dethiobiotin (DTB) to biotin by the insertion of a sulfur atom into dethiobiotin via a radical-based mechanism. The protein is Biotin synthase of Methanococcus vannielii (strain ATCC 35089 / DSM 1224 / JCM 13029 / OCM 148 / SB).